A 403-amino-acid chain; its full sequence is Methylthioribose-1-phosphate isomerase (403 aa).

The active-site Proton donor is Asp-280.

This sequence belongs to the eIF-2B alpha/beta/delta subunits family. MtnA subfamily.

It is found in the cytoplasm. Its subcellular location is the nucleus. The catalysed reaction is 5-(methylsulfanyl)-alpha-D-ribose 1-phosphate = 5-(methylsulfanyl)-D-ribulose 1-phosphate. It functions in the pathway amino-acid biosynthesis; L-methionine biosynthesis via salvage pathway; L-methionine from S-methyl-5-thio-alpha-D-ribose 1-phosphate: step 1/6. Its function is as follows. Catalyzes the interconversion of methylthioribose-1-phosphate (MTR-1-P) into methylthioribulose-1-phosphate (MTRu-1-P). This is Methylthioribose-1-phosphate isomerase from Eremothecium gossypii (strain ATCC 10895 / CBS 109.51 / FGSC 9923 / NRRL Y-1056) (Yeast).